We begin with the raw amino-acid sequence, 226 residues long: Ribonuclease 3 (226 aa).

The RNase III domain occupies 6-128; that stretch reads INRLQRKLGY…LIGAIFLDSD (123 aa). Glu41 contacts Mg(2+). Residue Asp45 is part of the active site. Residues Asp114 and Glu117 each coordinate Mg(2+). The active site involves Glu117. The DRBM domain maps to 155–225; sequence DPKTRLQEYL…AEQALKQLEL (71 aa).

This sequence belongs to the ribonuclease III family. In terms of assembly, homodimer. Mg(2+) is required as a cofactor.

It is found in the cytoplasm. It carries out the reaction Endonucleolytic cleavage to 5'-phosphomonoester.. Its function is as follows. Digests double-stranded RNA. Involved in the processing of primary rRNA transcript to yield the immediate precursors to the large and small rRNAs (23S and 16S). Processes some mRNAs, and tRNAs when they are encoded in the rRNA operon. Processes pre-crRNA and tracrRNA of type II CRISPR loci if present in the organism. The protein is Ribonuclease 3 of Photorhabdus laumondii subsp. laumondii (strain DSM 15139 / CIP 105565 / TT01) (Photorhabdus luminescens subsp. laumondii).